The sequence spans 499 residues: Glycerol kinase (499 aa).

Thr-12 provides a ligand contact to ADP. Positions 12, 13, and 14 each coordinate ATP. Residue Thr-12 participates in sn-glycerol 3-phosphate binding. Arg-16 is an ADP binding site. Sn-glycerol 3-phosphate contacts are provided by Arg-82, Glu-83, Tyr-134, and Asp-245. Glycerol-binding residues include Arg-82, Glu-83, Tyr-134, Asp-245, and Gln-246. 2 residues coordinate ADP: Thr-267 and Gly-311. Positions 267, 311, 315, and 412 each coordinate ATP. Positions 412 and 416 each coordinate ADP.

It belongs to the FGGY kinase family.

It carries out the reaction glycerol + ATP = sn-glycerol 3-phosphate + ADP + H(+). It functions in the pathway polyol metabolism; glycerol degradation via glycerol kinase pathway; sn-glycerol 3-phosphate from glycerol: step 1/1. Its activity is regulated as follows. Inhibited by fructose 1,6-bisphosphate (FBP). Its function is as follows. Key enzyme in the regulation of glycerol uptake and metabolism. Catalyzes the phosphorylation of glycerol to yield sn-glycerol 3-phosphate. This is Glycerol kinase from Brucella anthropi (strain ATCC 49188 / DSM 6882 / CCUG 24695 / JCM 21032 / LMG 3331 / NBRC 15819 / NCTC 12168 / Alc 37) (Ochrobactrum anthropi).